The sequence spans 146 residues: 3-dehydroquinate dehydratase (146 aa).

Tyr-23 acts as the Proton acceptor in catalysis. Substrate contacts are provided by Asn-74, His-80, and Asp-87. The Proton donor role is filled by His-100. Residues 101 to 102 (IS) and Arg-111 contribute to the substrate site.

The protein belongs to the type-II 3-dehydroquinase family. Homododecamer.

It catalyses the reaction 3-dehydroquinate = 3-dehydroshikimate + H2O. The protein operates within metabolic intermediate biosynthesis; chorismate biosynthesis; chorismate from D-erythrose 4-phosphate and phosphoenolpyruvate: step 3/7. In terms of biological role, catalyzes a trans-dehydration via an enolate intermediate. The chain is 3-dehydroquinate dehydratase from Bacillus mycoides (strain KBAB4) (Bacillus weihenstephanensis).